The sequence spans 417 residues: NADH-quinone oxidoreductase subunit D (417 aa).

Belongs to the complex I 49 kDa subunit family. In terms of assembly, NDH-1 is composed of 14 different subunits. Subunits NuoB, C, D, E, F, and G constitute the peripheral sector of the complex.

Its subcellular location is the cell inner membrane. The catalysed reaction is a quinone + NADH + 5 H(+)(in) = a quinol + NAD(+) + 4 H(+)(out). Its function is as follows. NDH-1 shuttles electrons from NADH, via FMN and iron-sulfur (Fe-S) centers, to quinones in the respiratory chain. The immediate electron acceptor for the enzyme in this species is believed to be ubiquinone. Couples the redox reaction to proton translocation (for every two electrons transferred, four hydrogen ions are translocated across the cytoplasmic membrane), and thus conserves the redox energy in a proton gradient. This Nitrosospira multiformis (strain ATCC 25196 / NCIMB 11849 / C 71) protein is NADH-quinone oxidoreductase subunit D.